Reading from the N-terminus, the 267-residue chain is Undecaprenyl-diphosphatase (267 aa).

The next 7 helical transmembrane spans lie at 1 to 21 (MTLWQAFILSLIQGITEFLPI), 39 to 59 (AGVAFDAFTGLGTLTAVLFYY), 85 to 105 (AKLGNQLIVATLPALLIGFMV), 117 to 137 (LLIASTTMIFAIFLAAADFWG), 189 to 209 (FSFLQSIPISAAAGGYGLWKL), 220 to 240 (LIALSYVTATLAAYVCIALFI), and 246 to 266 (VGMMPHVIYRLLLGAYLFFVF).

This sequence belongs to the UppP family.

The protein resides in the cell inner membrane. The enzyme catalyses di-trans,octa-cis-undecaprenyl diphosphate + H2O = di-trans,octa-cis-undecaprenyl phosphate + phosphate + H(+). Functionally, catalyzes the dephosphorylation of undecaprenyl diphosphate (UPP). Confers resistance to bacitracin. This chain is Undecaprenyl-diphosphatase, found in Dichelobacter nodosus (strain VCS1703A).